A 208-amino-acid chain; its full sequence is MTSTGSNAAAARTARMERATSESSVLVEINLDGTGVSDIDTSVPFYDHMLTALCKHSLIDMTVKATGDTHIDVHHTVEDVAITFGEVLRTALGNKAGIRRFGEATVPLDEALANAVVDVSGRPYLVHGGEPAGQEYHLIGGHFTGSLTRHVFEAITLHAGICLHMNVIAGRDPHHIVEAQFKAFARALRAAVEPDPRVEGIPSTKGAL.

The protein belongs to the imidazoleglycerol-phosphate dehydratase family.

Its subcellular location is the cytoplasm. The enzyme catalyses D-erythro-1-(imidazol-4-yl)glycerol 3-phosphate = 3-(imidazol-4-yl)-2-oxopropyl phosphate + H2O. The protein operates within amino-acid biosynthesis; L-histidine biosynthesis; L-histidine from 5-phospho-alpha-D-ribose 1-diphosphate: step 6/9. This is Imidazoleglycerol-phosphate dehydratase from Pseudarthrobacter chlorophenolicus (strain ATCC 700700 / DSM 12829 / CIP 107037 / JCM 12360 / KCTC 9906 / NCIMB 13794 / A6) (Arthrobacter chlorophenolicus).